Reading from the N-terminus, the 185-residue chain is MLQTIYNETKDLMQKSIQALNREFSTLRSAKVSVNILDHIKVDYYGTPTALNQVGSVMSLDATTLQISPWEKNLLKEIERAIQEANIGVNPNNDGETIKLFFPPMTTEQRKLIAKDAKAMGEKAKVAVRNIRQDANNKVKKLEKDKEISEDESKKAQEQVQKITDEAIKKIDESVKNKEDAILKV.

The segment at 138–159 (KVKKLEKDKEISEDESKKAQEQ) is disordered.

Belongs to the RRF family.

The protein resides in the cytoplasm. In terms of biological role, responsible for the release of ribosomes from messenger RNA at the termination of protein biosynthesis. May increase the efficiency of translation by recycling ribosomes from one round of translation to another. This Helicobacter acinonychis (strain Sheeba) protein is Ribosome-recycling factor.